We begin with the raw amino-acid sequence, 122 residues long: Small ribosomal subunit protein uS13 (122 aa).

Residues 94 to 122 form a disordered region; that stretch reads KKLPVRGQRTHTNARTRKGPAKPIAGKKK.

This sequence belongs to the universal ribosomal protein uS13 family. As to quaternary structure, part of the 30S ribosomal subunit. Forms a loose heterodimer with protein S19. Forms two bridges to the 50S subunit in the 70S ribosome.

Located at the top of the head of the 30S subunit, it contacts several helices of the 16S rRNA. In the 70S ribosome it contacts the 23S rRNA (bridge B1a) and protein L5 of the 50S subunit (bridge B1b), connecting the 2 subunits; these bridges are implicated in subunit movement. Contacts the tRNAs in the A and P-sites. This is Small ribosomal subunit protein uS13 from Hyphomonas neptunium (strain ATCC 15444).